The sequence spans 456 residues: 3-isopropylmalate dehydratase large subunit (456 aa).

Residues cysteine 336, cysteine 396, and cysteine 399 each contribute to the [4Fe-4S] cluster site.

It belongs to the aconitase/IPM isomerase family. LeuC type 1 subfamily. In terms of assembly, heterodimer of LeuC and LeuD. [4Fe-4S] cluster is required as a cofactor.

It carries out the reaction (2R,3S)-3-isopropylmalate = (2S)-2-isopropylmalate. Its pathway is amino-acid biosynthesis; L-leucine biosynthesis; L-leucine from 3-methyl-2-oxobutanoate: step 2/4. Its function is as follows. Catalyzes the isomerization between 2-isopropylmalate and 3-isopropylmalate, via the formation of 2-isopropylmaleate. The protein is 3-isopropylmalate dehydratase large subunit of Staphylococcus epidermidis (strain ATCC 12228 / FDA PCI 1200).